A 77-amino-acid chain; its full sequence is Translation initiation factor IF-1, chloroplastic (77 aa).

The S1-like domain occupies 1-71 (MKEQKLIHEG…TRGRIIYRLR (71 aa)).

It belongs to the IF-1 family. In terms of assembly, component of the 30S ribosomal translation pre-initiation complex which assembles on the 30S ribosome in the order IF-2 and IF-3, IF-1 and N-formylmethionyl-tRNA(fMet); mRNA recruitment can occur at any time during PIC assembly.

The protein resides in the plastid. Its subcellular location is the chloroplast. In terms of biological role, one of the essential components for the initiation of protein synthesis. Stabilizes the binding of IF-2 and IF-3 on the 30S subunit to which N-formylmethionyl-tRNA(fMet) subsequently binds. Helps modulate mRNA selection, yielding the 30S pre-initiation complex (PIC). Upon addition of the 50S ribosomal subunit IF-1, IF-2 and IF-3 are released leaving the mature 70S translation initiation complex. In Phalaenopsis aphrodite subsp. formosana (Moth orchid), this protein is Translation initiation factor IF-1, chloroplastic.